A 237-amino-acid chain; its full sequence is 2,3,4,5-tetrahydropyridine-2,6-dicarboxylate N-acetyltransferase (237 aa).

It belongs to the transferase hexapeptide repeat family. DapH subfamily.

It catalyses the reaction (S)-2,3,4,5-tetrahydrodipicolinate + acetyl-CoA + H2O = L-2-acetamido-6-oxoheptanedioate + CoA. It functions in the pathway amino-acid biosynthesis; L-lysine biosynthesis via DAP pathway; LL-2,6-diaminopimelate from (S)-tetrahydrodipicolinate (acetylase route): step 1/3. Catalyzes the transfer of an acetyl group from acetyl-CoA to tetrahydrodipicolinate. The chain is 2,3,4,5-tetrahydropyridine-2,6-dicarboxylate N-acetyltransferase from Limosilactobacillus fermentum (strain NBRC 3956 / LMG 18251) (Lactobacillus fermentum).